Consider the following 234-residue polypeptide: Small ribosomal subunit protein uS3 (234 aa).

A KH type-2 domain is found at Ile39 to Arg107. Positions Gln215 to Ala227 are enriched in basic and acidic residues. Residues Gln215–Ala234 form a disordered region.

This sequence belongs to the universal ribosomal protein uS3 family. Part of the 30S ribosomal subunit. Forms a tight complex with proteins S10 and S14.

Functionally, binds the lower part of the 30S subunit head. Binds mRNA in the 70S ribosome, positioning it for translation. The sequence is that of Small ribosomal subunit protein uS3 from Maricaulis maris (strain MCS10) (Caulobacter maris).